The primary structure comprises 223 residues: Germin-like protein 1-3 (223 aa).

The signal sequence occupies residues 1–22; that stretch reads MAKLILATFAVVFMALAATSLA. A disulfide bond links Cys32 and Cys50. The N-linked (GlcNAc...) asparagine glycan is linked to Asn55. The Cupin type-1 domain occupies 64 to 212; sequence DGLMKAGNTG…AFQVDGGMVE (149 aa). Mn(2+) contacts are provided by His112, His114, Glu119, and His158.

The protein belongs to the germin family. In terms of assembly, oligomer (believed to be a pentamer but probably hexamer).

Its subcellular location is the secreted. It is found in the extracellular space. The protein localises to the apoplast. May play a role in plant defense. Probably has no oxalate oxidase activity even if the active site is conserved. The protein is Germin-like protein 1-3 (GER8) of Oryza sativa subsp. japonica (Rice).